A 471-amino-acid polypeptide reads, in one-letter code: Coagulation factor IX (471 aa).

Residues 1-19 form the signal peptide; it reads MAKIPLILSFCLLEAFLGA. Residues 20–39 constitute a propeptide that is removed on maturation; it reads ESTVFIENKEASTVLSRTRR. One can recognise a Gla domain in the interval 40–85; it reads GNSNRLEELIPGNLERECIEEKCSFEEAREVFENTEKTMEFWKIYI. 10 residues coordinate Ca(2+): N41, E46, E47, E54, E56, E59, E60, E65, E66, and E69. 4-carboxyglutamate is present on residues E46, E47, E54, E56, E59, E60, E65, E66, E69, E72, E75, and E79. E54 is a Mg(2+) binding site. A disulfide bridge connects residues C57 and C62. Residue E59 coordinates Mg(2+). Residue E65 participates in Mg(2+) binding. E69 contacts Mg(2+). Residues E75, E79, D86, G87, and Q89 each coordinate Ca(2+). The Mg(2+) site is built by E75 and E79. Residues 86 to 122 form the EGF-like 1; calcium-binding domain; the sequence is DGDQCNSNPCKNGAVCKDGVSSYECMCPPGYGGRNCE. 10 disulfide bridges follow: C90–C101, C95–C110, C112–C121, C127–C138, C134–C148, C150–C163, C171–C345, C262–C278, C392–C406, and C417–C445. A glycan (O-linked (Glc...) serine) is linked at S92. Ca(2+) is bound at residue D103. The residue at position 103 (D103) is a (3R)-3-hydroxyaspartate. S107 carries the phosphoserine modification. Residues 123–164 enclose the EGF-like 2 domain; that stretch reads IDSTCATKNGGCEHFCRHDTPQKAVCSCASGYKLHEDGKSCK. Residues 186-235 constitute a propeptide, activation peptide; it reads TENTIERWNITAHDEGDAHDEALDITEPPPPPTTSAAPAKIVPITKNDTR. The Peptidase S1 domain occupies 236–469; that stretch reads VVGGYDSVKG…YVKWIRETTR (234 aa). H277 acts as the Charge relay system in catalysis. The Ca(2+) site is built by E291, N293, E296, and E301. D325 acts as the Charge relay system in catalysis. S421 serves as the catalytic Charge relay system.

Belongs to the peptidase S1 family. Heterodimer of a light chain and a heavy chain; disulfide-linked. Post-translationally, activated by factor XIa, which excises the activation peptide. The propeptide can also be removed by snake venom protease. Activated by coagulation factor VIIa-tissue factor (F7-F3) complex in calcium-dependent manner. In terms of processing, the iron and 2-oxoglutarate dependent 3-hydroxylation of aspartate and asparagine is (R) stereospecific within EGF domains.

It is found in the secreted. The catalysed reaction is Selective cleavage of Arg-|-Ile bond in factor X to form factor Xa.. Factor IX is a vitamin K-dependent plasma protein that participates in the intrinsic pathway of blood coagulation by converting factor X to its active form in the presence of Ca(2+) ions, phospholipids, and factor VIIIa. This chain is Coagulation factor IX (F9), found in Gallus gallus (Chicken).